The primary structure comprises 322 residues: MEIIKITPRGYCYGVVDAMVIARNASLDKTLPRPIYILGMIVHNKHVTDAFESDGIITLDGPNRLEILEQIETGTVIFTAHGVSPEVKRRAKEKGLVCIDATCPDVENTHTLIRRKKADGYHVIYIGKKGHPEPEGAVGVAPDIVHLVENKQDIEQLPESLNDQKLIVTNQTTMSQWDVKHLMEDLEEKFPHIEVHKEICLATQVRQEAVANQAPSADVLIVVGDPKSNNSNRLAQVSKEIAHTEAYRISDISELKLEWLEGKSTIAVTAGASTPTPIVKEVIDYIKGYDPLNITPIPETSGVPVDKILPKIKNAAPVKILD.

Cys-12 is a binding site for [4Fe-4S] cluster. Residues His-43 and His-81 each contribute to the (2E)-4-hydroxy-3-methylbut-2-enyl diphosphate site. Dimethylallyl diphosphate contacts are provided by His-43 and His-81. Isopentenyl diphosphate-binding residues include His-43 and His-81. Cys-103 lines the [4Fe-4S] cluster pocket. His-131 is a (2E)-4-hydroxy-3-methylbut-2-enyl diphosphate binding site. His-131 provides a ligand contact to dimethylallyl diphosphate. Residue His-131 coordinates isopentenyl diphosphate. The Proton donor role is filled by Glu-133. Thr-172 provides a ligand contact to (2E)-4-hydroxy-3-methylbut-2-enyl diphosphate. Residue Cys-200 participates in [4Fe-4S] cluster binding. Positions 228, 230, and 273 each coordinate (2E)-4-hydroxy-3-methylbut-2-enyl diphosphate. Positions 228, 230, and 273 each coordinate dimethylallyl diphosphate. Isopentenyl diphosphate is bound by residues Ser-228, Asn-230, and Ser-273.

The protein belongs to the IspH family. Requires [4Fe-4S] cluster as cofactor.

The catalysed reaction is isopentenyl diphosphate + 2 oxidized [2Fe-2S]-[ferredoxin] + H2O = (2E)-4-hydroxy-3-methylbut-2-enyl diphosphate + 2 reduced [2Fe-2S]-[ferredoxin] + 2 H(+). It catalyses the reaction dimethylallyl diphosphate + 2 oxidized [2Fe-2S]-[ferredoxin] + H2O = (2E)-4-hydroxy-3-methylbut-2-enyl diphosphate + 2 reduced [2Fe-2S]-[ferredoxin] + 2 H(+). The protein operates within isoprenoid biosynthesis; dimethylallyl diphosphate biosynthesis; dimethylallyl diphosphate from (2E)-4-hydroxy-3-methylbutenyl diphosphate: step 1/1. It functions in the pathway isoprenoid biosynthesis; isopentenyl diphosphate biosynthesis via DXP pathway; isopentenyl diphosphate from 1-deoxy-D-xylulose 5-phosphate: step 6/6. Functionally, catalyzes the conversion of 1-hydroxy-2-methyl-2-(E)-butenyl 4-diphosphate (HMBPP) into a mixture of isopentenyl diphosphate (IPP) and dimethylallyl diphosphate (DMAPP). Acts in the terminal step of the DOXP/MEP pathway for isoprenoid precursor biosynthesis. The sequence is that of 4-hydroxy-3-methylbut-2-enyl diphosphate reductase from Macrococcus caseolyticus (strain JCSC5402) (Macrococcoides caseolyticum).